Here is a 151-residue protein sequence, read N- to C-terminus: Ribosome maturation factor RimP (151 aa).

It belongs to the RimP family.

The protein localises to the cytoplasm. Its function is as follows. Required for maturation of 30S ribosomal subunits. This chain is Ribosome maturation factor RimP, found in Desulfotalea psychrophila (strain LSv54 / DSM 12343).